We begin with the raw amino-acid sequence, 492 residues long: MSLLKMEYNLYAELKKMTCGQTISLFNEDGDFVEVEPGSSFKFLIPKGFYSSPCVKTSLVFETLTTTDNKITSINPTNAPKLYPLQRKVVSEVVSNMRKMIELKRPLYITLHLACGFGKTITTCYLMTTHGRKTIICVPNKMLIHQWKTQVEAVGLEHKISIDGVSSLLKELKTQSPDVLIVVSRHLTNDAFCKYINKHYDLFILDESHTYNLMNNTAVTRFLAYYPPMMCYFLTATPRPANRIYCNSIINIAKLSDLKKTIYIVDSFFEPYSTDNIRNMVKRLDGPSNKYHIYTEKLLSVDEPRNQLILDTLVEEFKSGTINRILVITKLREHMVFFYKRLLDLFGAEVVFIGDAQNRRTPDMVKSIKELNRFIFVSTLFYSGTGLDIPSLDSLFICSAVINNMQIEQLLGRVCRETELLDRTVYVFPNTSIKEIKYMIGNFVQRIISLSVDKLGFKQESYQKHQESEPASVPTSSREERVLNRIFNSQNR.

The region spanning 100-256 is the Helicase ATP-binding domain; sequence MIELKRPLYI…NSIINIAKLS (157 aa). ATP is bound at residue 113–120; the sequence is LACGFGKT. Residues 206–209 carry the DEAH box motif; it reads DESH.

It belongs to the helicase family. Poxviruses subfamily. In terms of assembly, interacts with OPG087. Might be part of a transcription complex composed at least of OPG087, OPG110, and OPG145.

The protein localises to the virion. Its function is as follows. DNA helicase which seems to act as a postreplicative transcription termination factor. Involved in ATP-dependent release of nascent RNA. Forms a stable complex with single-stranded DNA, and to a lesser extent RNA. The polypeptide is Transcript termination protein OPG145 (OPG145) (Cynomys gunnisoni (Gunnison's prairie dog)).